Here is a 322-residue protein sequence, read N- to C-terminus: Protein prune homolog 2 (322 aa).

Residues 1–110 (MDIHFEEGVL…SIPEYTAEEE (110 aa)) form a disordered region. The span at 40–52 (PNINLSLDQSEGS) shows a compositional bias: polar residues. Positions 57-80 (DNLDSPDEIDINVDELDTPDEADS) are enriched in acidic residues. The region spanning 130-291 (DMKVIEPYRR…SIIKYDEEKS (162 aa)) is the CRAL-TRIO domain.

The protein resides in the cytoplasm. In terms of biological role, may play an important role in regulating differentiation, survival and aggressiveness of the tumor cells. The polypeptide is Protein prune homolog 2 (Prune2) (Rattus norvegicus (Rat)).